We begin with the raw amino-acid sequence, 912 residues long: Accessory gland protein Acp36DE (912 aa).

A signal peptide spans 1 to 23 (MWTLTCQQFIALILLGTLVPSES). Low complexity-rich tracts occupy residues 193–220 (QSQSQTQSQSASQSESNASSQFQAQEQS), 230–255 (SESQSQSESQSQSESQKQSQSQSQRQ), 271–324 (KSNE…GLQQ), and 521–544 (QSQLQESKSNSLSQSQSQSQEQLQ). Disordered stretches follow at residues 193–255 (QSQS…SQRQ), 271–349 (KSNE…QKQL), 518–544 (TQTQSQLQESKSNSLSQSQSQSQEQLQ), 638–671 (PSEGKPAPGNQGPSIEPKLVPQPGSLDKLPSGGG), and 732–912 (GQQQ…NLSG). 2 stretches are compositionally biased toward low complexity: residues 732–757 (GQQQKEQQAQESINKQQSSSAGSSSQ) and 765–785 (QSTGAQGSQQGLQAGSTGLQT). The segment covering 803–818 (RLKEQEQLRIQTENDQ) has biased composition (basic and acidic residues). A compositionally biased stretch (low complexity) spans 821-845 (SSSSSHSNSQNSQSSSSQSSQASQS). Residues 851–861 (EAGNRNTLLLD) show a composition bias toward polar residues. Low complexity predominate over residues 862–897 (QSSSKTQSESKSESSSQSSSHSSSQSTSNSSSNVQS). Residues 898–912 (KLQGESQALLNNLSG) are compositionally biased toward polar residues.

Proteolytically cleaved by the seminal metalloprotease Semp1. Cleavage appears to take place in the mated female. As to expression, detected in the male accessory glands (at protein level). Produced in the accessory glands and secreted into seminal fluid.

It localises to the secreted. Functionally, responsible for physiological and behavioral changes in mated female flies. Associates with sperm and localizes to specific regions of the female reproductive tract, including the sperm storage organs. It accelerates sperm accumulation into storage but does not mediate the entry of the first sperm into storage. Once sperm storage has initiated it seems to act as a guidance factor helping subsequent sperm move into storage, a corral concentrating sperm around the SSO entrances and/or a trigger for responses within the female that accelerate storage of sperm. This chain is Accessory gland protein Acp36DE (Acp36DE), found in Drosophila melanogaster (Fruit fly).